A 438-amino-acid chain; its full sequence is Tyrosine--tRNA ligase (438 aa).

An L-tyrosine-binding site is contributed by Y47. Residues 52 to 61 carry the 'HIGH' region motif; it reads PTATSLHVGG. L-tyrosine is bound by residues Y183 and Q187. A 'KMSKS' region motif is present at residues 243 to 247; it reads KMGKT. Residue K246 coordinates ATP. Positions 370–436 constitute an S4 RNA-binding domain; sequence LWIVEALQTA…GKRKYALLKI (67 aa).

Belongs to the class-I aminoacyl-tRNA synthetase family. TyrS type 1 subfamily. As to quaternary structure, homodimer.

It is found in the cytoplasm. The catalysed reaction is tRNA(Tyr) + L-tyrosine + ATP = L-tyrosyl-tRNA(Tyr) + AMP + diphosphate + H(+). In terms of biological role, catalyzes the attachment of tyrosine to tRNA(Tyr) in a two-step reaction: tyrosine is first activated by ATP to form Tyr-AMP and then transferred to the acceptor end of tRNA(Tyr). In Rhodopirellula baltica (strain DSM 10527 / NCIMB 13988 / SH1), this protein is Tyrosine--tRNA ligase.